The chain runs to 461 residues: Protein KlcB (461 aa).

2 disordered regions span residues Pro84 to Lys107 and Arg349 to Pro379. Positions Ala91–Lys101 are enriched in basic residues. The segment covering Gly357–Asp377 has biased composition (basic and acidic residues).

In Escherichia coli, this protein is Protein KlcB (klcB).